The following is an 890-amino-acid chain: Alanine--tRNA ligase (890 aa).

His-573, His-577, Cys-676, and His-680 together coordinate Zn(2+).

The protein belongs to the class-II aminoacyl-tRNA synthetase family. The cofactor is Zn(2+).

It is found in the cytoplasm. It carries out the reaction tRNA(Ala) + L-alanine + ATP = L-alanyl-tRNA(Ala) + AMP + diphosphate. Its function is as follows. Catalyzes the attachment of alanine to tRNA(Ala) in a two-step reaction: alanine is first activated by ATP to form Ala-AMP and then transferred to the acceptor end of tRNA(Ala). Also edits incorrectly charged Ser-tRNA(Ala) and Gly-tRNA(Ala) via its editing domain. In Corynebacterium efficiens (strain DSM 44549 / YS-314 / AJ 12310 / JCM 11189 / NBRC 100395), this protein is Alanine--tRNA ligase.